A 73-amino-acid polypeptide reads, in one-letter code: Ubiquitin-like protein 5 (73 aa).

The region spanning Met-1–Gln-73 is the Ubiquitin-like domain.

Its subcellular location is the cytoplasm. The protein is Ubiquitin-like protein 5 (ubl) of Drosophila melanogaster (Fruit fly).